The following is a 150-amino-acid chain: Large ribosomal subunit protein bL9 (150 aa).

It belongs to the bacterial ribosomal protein bL9 family.

Its function is as follows. Binds to the 23S rRNA. In Burkholderia ambifaria (strain MC40-6), this protein is Large ribosomal subunit protein bL9.